We begin with the raw amino-acid sequence, 105 residues long: UPF0235 protein A1G_07140 (105 aa).

It belongs to the UPF0235 family.

The sequence is that of UPF0235 protein A1G_07140 from Rickettsia rickettsii (strain Sheila Smith).